The chain runs to 34 residues: Photosystem II reaction center protein M (34 aa).

The chain crosses the membrane as a helical span at residues 5–25 (ILGLIATTLFILIPTSFLLIL).

The protein belongs to the PsbM family. PSII is composed of 1 copy each of membrane proteins PsbA, PsbB, PsbC, PsbD, PsbE, PsbF, PsbH, PsbI, PsbJ, PsbK, PsbL, PsbM, PsbT, PsbX, PsbY, PsbZ, Psb30/Ycf12, at least 3 peripheral proteins of the oxygen-evolving complex and a large number of cofactors. It forms dimeric complexes.

The protein resides in the plastid. Its subcellular location is the chloroplast thylakoid membrane. One of the components of the core complex of photosystem II (PSII). PSII is a light-driven water:plastoquinone oxidoreductase that uses light energy to abstract electrons from H(2)O, generating O(2) and a proton gradient subsequently used for ATP formation. It consists of a core antenna complex that captures photons, and an electron transfer chain that converts photonic excitation into a charge separation. This subunit is found at the monomer-monomer interface. In Pleurastrum terricola (Filamentous green alga), this protein is Photosystem II reaction center protein M.